The chain runs to 448 residues: uncharacterized protein (448 aa).

K280 bears the N6-(pyridoxal phosphate)lysine mark.

It belongs to the class-III pyridoxal-phosphate-dependent aminotransferase family.

It is found in the cytoplasm. It localises to the mitochondrion. This is an uncharacterized protein from Schizosaccharomyces pombe (strain 972 / ATCC 24843) (Fission yeast).